The chain runs to 338 residues: MTVFKNERLSWLPYIAIVILLHVIGFSFLWIAGKDHHILFGMGILAYTLGLRHAFDADHIAAIDNTVRKLLQQRKDPSGVGFYFSIGHSSVVFLMAVFLGVSVKWAKDELPHFQDIGGTIGTLVSGFFLVLIGVLNLIILISLINLFAKLRREHIEEAEVDALLESRGLVSRFVGPYFKLITRSWHVLPLGFLFGLGFDTASEIALLALSSGASQQAISFIGILSLPILFASGMSLLDTLDGVVMKYAYNWAFFNPIRKIYYNITITAISVMAALVIGMIELLQILADKLDLHGAFWAFIGSIEFDYLGYILVALFLITWLISSLIWKFGRIEHKWSR.

8 helical membrane-spanning segments follow: residues 11–31, 37–57, 79–99, 127–147, 187–207, 217–237, 266–286, and 307–327; these read WLPY…FLWI, HILF…AFDA, GVGF…AVFL, FFLV…INLF, VLPL…IALL, AISF…MSLL, ITAI…LQIL, and YLGY…SLIW.

Belongs to the NiCoT transporter (TC 2.A.52) family.

Its subcellular location is the cell membrane. Functionally, secondary nickel transporter. Required for full urease activity. The protein is Nickel transporter NixA of Staphylococcus aureus (strain NCTC 8325 / PS 47).